The sequence spans 631 residues: Phosphomethylpyrimidine synthase (631 aa).

Substrate-binding positions include N239, M268, Y297, H333, 353–355, 394–397, and E433; these read SRG and DGLR. Zn(2+) is bound at residue H437. Y460 is a substrate binding site. H501 serves as a coordination point for Zn(2+). 3 residues coordinate [4Fe-4S] cluster: C581, C584, and C589.

It belongs to the ThiC family. Homodimer. Requires [4Fe-4S] cluster as cofactor.

The catalysed reaction is 5-amino-1-(5-phospho-beta-D-ribosyl)imidazole + S-adenosyl-L-methionine = 4-amino-2-methyl-5-(phosphooxymethyl)pyrimidine + CO + 5'-deoxyadenosine + formate + L-methionine + 3 H(+). It functions in the pathway cofactor biosynthesis; thiamine diphosphate biosynthesis. Catalyzes the synthesis of the hydroxymethylpyrimidine phosphate (HMP-P) moiety of thiamine from aminoimidazole ribotide (AIR) in a radical S-adenosyl-L-methionine (SAM)-dependent reaction. The protein is Phosphomethylpyrimidine synthase of Citrobacter koseri (strain ATCC BAA-895 / CDC 4225-83 / SGSC4696).